A 475-amino-acid chain; its full sequence is Tubulin gamma-1 chain (475 aa).

142-148 (AGGTGSG) serves as a coordination point for GTP. The tract at residues 453 to 475 (VKRGNGPVDSKSEDSRSVTSAGS) is disordered.

It belongs to the tubulin family. Interacts with Ote.

It localises to the cytoplasm. It is found in the cytoskeleton. Its subcellular location is the microtubule organizing center. The protein resides in the centrosome. The protein localises to the perinuclear region. Tubulin is the major constituent of microtubules. The gamma chain is found at microtubule organizing centers (MTOC) such as the spindle poles or the centrosome, suggesting that it is involved in the minus-end nucleation of microtubule assembly. The sequence is that of Tubulin gamma-1 chain (gammaTub23C) from Drosophila melanogaster (Fruit fly).